A 163-amino-acid chain; its full sequence is Endoribonuclease YbeY (163 aa).

Zn(2+)-binding residues include histidine 116, histidine 120, and histidine 126.

The protein belongs to the endoribonuclease YbeY family. Zn(2+) serves as cofactor.

Its subcellular location is the cytoplasm. Its function is as follows. Single strand-specific metallo-endoribonuclease involved in late-stage 70S ribosome quality control and in maturation of the 3' terminus of the 16S rRNA. The chain is Endoribonuclease YbeY from Idiomarina loihiensis (strain ATCC BAA-735 / DSM 15497 / L2-TR).